Here is a 164-residue protein sequence, read N- to C-terminus: Protein SprT (164 aa).

Residues 13-156 (YQQAEAFFKR…LCRRCREPLV (144 aa)) enclose the SprT-like domain. His69 contacts Zn(2+). Glu70 is an active-site residue. His73 provides a ligand contact to Zn(2+).

The protein belongs to the SprT family. It depends on Zn(2+) as a cofactor.

Its subcellular location is the cytoplasm. In Pseudomonas syringae pv. syringae (strain B728a), this protein is Protein SprT.